A 61-amino-acid chain; its full sequence is Large ribosomal subunit protein uL30 (61 aa).

It belongs to the universal ribosomal protein uL30 family. As to quaternary structure, part of the 50S ribosomal subunit.

The sequence is that of Large ribosomal subunit protein uL30 from Corynebacterium urealyticum (strain ATCC 43042 / DSM 7109).